Reading from the N-terminus, the 323-residue chain is tRNA dimethylallyltransferase (323 aa).

Residue 12-19 coordinates ATP; the sequence is GPTAAGKT. 14–19 provides a ligand contact to substrate; sequence TAAGKT. Interaction with substrate tRNA stretches follow at residues 37-40 and 161-165; these read DSAL and QRLIR.

It belongs to the IPP transferase family. Monomer. Mg(2+) serves as cofactor.

It catalyses the reaction adenosine(37) in tRNA + dimethylallyl diphosphate = N(6)-dimethylallyladenosine(37) in tRNA + diphosphate. Functionally, catalyzes the transfer of a dimethylallyl group onto the adenine at position 37 in tRNAs that read codons beginning with uridine, leading to the formation of N6-(dimethylallyl)adenosine (i(6)A). The polypeptide is tRNA dimethylallyltransferase (Pseudomonas putida (strain ATCC 47054 / DSM 6125 / CFBP 8728 / NCIMB 11950 / KT2440)).